Consider the following 94-residue polypeptide: Large ribosomal subunit protein bL28 (94 aa).

It belongs to the bacterial ribosomal protein bL28 family.

The polypeptide is Large ribosomal subunit protein bL28 (Maricaulis maris (strain MCS10) (Caulobacter maris)).